The primary structure comprises 104 residues: Large ribosomal subunit protein uL24 (104 aa).

Belongs to the universal ribosomal protein uL24 family. Part of the 50S ribosomal subunit.

Functionally, one of two assembly initiator proteins, it binds directly to the 5'-end of the 23S rRNA, where it nucleates assembly of the 50S subunit. Its function is as follows. One of the proteins that surrounds the polypeptide exit tunnel on the outside of the subunit. This Pseudomonas entomophila (strain L48) protein is Large ribosomal subunit protein uL24.